Consider the following 256-residue polypeptide: Thiazole synthase (256 aa).

Lys96 serves as the catalytic Schiff-base intermediate with DXP. 1-deoxy-D-xylulose 5-phosphate-binding positions include Gly157, 184–185 (AG), and 206–207 (NT).

The protein belongs to the ThiG family. As to quaternary structure, homotetramer. Forms heterodimers with either ThiH or ThiS.

The protein resides in the cytoplasm. It catalyses the reaction [ThiS sulfur-carrier protein]-C-terminal-Gly-aminoethanethioate + 2-iminoacetate + 1-deoxy-D-xylulose 5-phosphate = [ThiS sulfur-carrier protein]-C-terminal Gly-Gly + 2-[(2R,5Z)-2-carboxy-4-methylthiazol-5(2H)-ylidene]ethyl phosphate + 2 H2O + H(+). Its pathway is cofactor biosynthesis; thiamine diphosphate biosynthesis. Its function is as follows. Catalyzes the rearrangement of 1-deoxy-D-xylulose 5-phosphate (DXP) to produce the thiazole phosphate moiety of thiamine. Sulfur is provided by the thiocarboxylate moiety of the carrier protein ThiS. In vitro, sulfur can be provided by H(2)S. The protein is Thiazole synthase of Brucella suis (strain ATCC 23445 / NCTC 10510).